We begin with the raw amino-acid sequence, 289 residues long: Oxygen-dependent coproporphyrinogen-III oxidase (289 aa).

Ser-82 serves as a coordination point for substrate. A divalent metal cation contacts are provided by His-86 and His-96. His-96 acts as the Proton donor in catalysis. Substrate is bound at residue 98 to 100 (NYR). Positions 130 and 160 each coordinate a divalent metal cation. The segment at 224–259 (YVEFNLVWDRGTIFGLQTNGRIESILMSMPPLVRWE) is important for dimerization.

Belongs to the aerobic coproporphyrinogen-III oxidase family. In terms of assembly, homodimer. A divalent metal cation is required as a cofactor.

The protein resides in the cytoplasm. It carries out the reaction coproporphyrinogen III + O2 + 2 H(+) = protoporphyrinogen IX + 2 CO2 + 2 H2O. The protein operates within porphyrin-containing compound metabolism; protoporphyrin-IX biosynthesis; protoporphyrinogen-IX from coproporphyrinogen-III (O2 route): step 1/1. Functionally, involved in the heme and chlorophyll biosynthesis. Catalyzes the aerobic oxidative decarboxylation of propionate groups of rings A and B of coproporphyrinogen-III to yield the vinyl groups in protoporphyrinogen-IX. In Gloeobacter violaceus (strain ATCC 29082 / PCC 7421), this protein is Oxygen-dependent coproporphyrinogen-III oxidase.